Reading from the N-terminus, the 299-residue chain is Regucalcin (299 aa).

E18 contacts a divalent metal cation. Substrate is bound by residues R101, N103, and E121. K144 is modified (N6-succinyllysine). 2 residues coordinate a divalent metal cation: N154 and D204. The Proton donor/acceptor role is filled by D204. N6-succinyllysine occurs at positions 244 and 253.

The protein belongs to the SMP-30/CGR1 family. As to quaternary structure, monomer. Requires Zn(2+) as cofactor. It depends on Mn(2+) as a cofactor. Ca(2+) is required as a cofactor. The cofactor is Mg(2+).

The protein resides in the cytoplasm. It catalyses the reaction D-glucono-1,5-lactone + H2O = D-gluconate + H(+). Functionally, gluconolactonase with low activity towards other sugar lactones, including gulonolactone and galactonolactone. Can also hydrolyze diisopropyl phosphorofluoridate and phenylacetate (in vitro). Calcium-binding protein. Modulates Ca(2+) signaling, and Ca(2+)-dependent cellular processes and enzyme activities. The sequence is that of Regucalcin (RGN) from Homo sapiens (Human).